We begin with the raw amino-acid sequence, 276 residues long: Secretagogin (276 aa).

EF-hand domains are found at residues 12-47 (LDAAGFWQIWQRFDADEKGYIEEKELDAFFHHVLTK), 58-93 (NVWKMKQQFMAAHDVSKDGHIQMKELACLFLSEDEN), 105-140 (DSSVEFMQIWRKYDADSSGFISAAELCNFLRDLFLH), 149-184 (KLEEYTGTMMKIFDKNKDGRLDLNDLARILALQENF), 197-232 (ERKRDFEKIFAHYDVSKTGALEGPEVDGFVKDMMEL), and 240-276 (VDLDKFREILLRHCDVNKDGKIQKSELALCLGLKINP). Residues aspartate 71, serine 73, aspartate 75, histidine 77, glutamate 82, aspartate 118, aspartate 120, serine 122, glutamate 129, aspartate 162, asparagine 164, aspartate 166, arginine 168, aspartate 173, aspartate 210, serine 212, threonine 214, glutamate 221, aspartate 254, asparagine 256, aspartate 258, lysine 260, and glutamate 265 each coordinate Ca(2+).

Its subcellular location is the cytoplasm. The protein resides in the secreted. It is found in the cytoplasmic vesicle. The protein localises to the secretory vesicle membrane. In Sus scrofa (Pig), this protein is Secretagogin (SCGN).